A 439-amino-acid chain; its full sequence is Proline--tRNA ligase (439 aa).

Belongs to the class-II aminoacyl-tRNA synthetase family. ProS type 2 subfamily. As to quaternary structure, homodimer.

The protein localises to the cytoplasm. It catalyses the reaction tRNA(Pro) + L-proline + ATP = L-prolyl-tRNA(Pro) + AMP + diphosphate. Catalyzes the attachment of proline to tRNA(Pro) in a two-step reaction: proline is first activated by ATP to form Pro-AMP and then transferred to the acceptor end of tRNA(Pro). The protein is Proline--tRNA ligase of Rhodopseudomonas palustris (strain BisB18).